A 492-amino-acid polypeptide reads, in one-letter code: GPI alpha-1,6-mannosyltransferase 2 (492 aa).

Residues 1-13 (MGLLDPSQKEVLK) lie on the Cytoplasmic side of the membrane. A helical transmembrane segment spans residues 14 to 34 (FAVSCRILTLVLQALFNIIIP). Over 35 to 77 (DHHADAFSPPRLAPSGSVDQLVEALLGGLSRWDAEHFLFIAEH) the chain is Lumenal. The helical transmembrane segment at 78-98 (GYLYEHNFAFFPGFPLALLMG) threads the bilayer. Topologically, residues 99–113 (TELLRPLQGLLSERS) are cytoplasmic. A helical transmembrane segment spans residues 114–134 (CLLVSVALLNSLFSVLAAVAL). Over 135-136 (HD) the chain is Lumenal. The helical transmembrane segment at 137–157 (LGCLVLHCPRQAFCAALLFCL) threads the bilayer. Residues 158–161 (SPAN) are Cytoplasmic-facing. The chain crosses the membrane as a helical span at residues 162–182 (VFLAAGYSEALFAFLTFSAMG). Topologically, residues 183 to 192 (QLERGRGWAS) are lumenal. Residues 193–213 (GLLFALAAGVRSNGLVSVGFL) traverse the membrane as a helical segment. Over 214 to 234 (LHSQCRGFCSSLVVLDPLKGL) the chain is Cytoplasmic. Residues 235 to 255 (VKLMASLCLSVLTVSLPFALF) form a helical membrane-spanning segment. At 256-327 (QYYAYTQFCF…RYYELRQVPN (72 aa)) the chain is on the lumenal side. The chain crosses the membrane as a helical span at residues 328–348 (FLLATPVTVLVVWATWTYVTA). The Cytoplasmic portion of the chain corresponds to 349-378 (HPWLCLTLGLQRTKDRESLEKPHPGFLSAK). A helical transmembrane segment spans residues 379 to 399 (VFVYLVHAAALLAFGGLCMHV). The Lumenal segment spans residues 400 to 468 (QVLTRLLGSS…NWKTCSPVTK (69 aa)). The helical transmembrane segment at 469–489 (CILVYFLTYWLLGLIMHCNFL) threads the bilayer. The Cytoplasmic portion of the chain corresponds to 490–492 (PWT).

It belongs to the PIGV family. Post-translationally, not N-glycosylated.

The protein resides in the endoplasmic reticulum membrane. It functions in the pathway glycolipid biosynthesis; glycosylphosphatidylinositol-anchor biosynthesis. In terms of biological role, alpha-1,6-mannosyltransferase that catalyzes the transfer of the second mannose, via an alpha-1,6 bond, from a dolichol-phosphate-mannose (Dol-P-Man) to the alpha-D-Man-(1-&gt;4)-alpha-D-GlcN-(1-&gt;6)-(1-radyl,2-acyl-sn-glycero-3-phospho)-2-acyl-inositol (also termed H2) intermediate to generate an alpha-D-Man-(1-&gt;6)-alpha-D-Man-(1-&gt;4)-alpha-D-GlcN-(1-&gt;6)-(1-radyl,2-acyl-sn-glycero-3-phospho)-2-acyl-inositol (also termed H3) and participates in the seventh step of the glycosylphosphatidylinositol-anchor biosynthesis. Also transfers the second mannose on a 2-PEtn-alpha-D-Man-(1-&gt;4)-alpha-D-GlcN-(1-&gt;6)-(1-radyl,2-acyl-sn-glycero-3-phospho)-2-acyl-inositol (also termed H5). This Rattus norvegicus (Rat) protein is GPI alpha-1,6-mannosyltransferase 2.